The chain runs to 876 residues: MDINTLLNTPDEDVLSLFTPQVARWFKEKYKVFTPPQKGAIPLIKKGKNVLVSSPTGSGKTLAAFLGILDTLIDLGYKNELNKQIYAIYISPLRALNNDMRRNLIEPLTELRNLYPDLPEISIGVRTSDTSSYEKQKMLKKPPHILITTPESFGISLVSPKFREKLSDVKWVIVDEIHELANSKRGAYLAGLLELYKSFIAKNNFVRIGLSATISPLEEVAKFLVGGNGDYEIIDARFVKPTDIQVVSPVKDLVHATEEEVNIGIYSYLVDEIKKHKTTLIFTNTRHAAERVAYKLRKMFEDQNIFDSDLVAAHHSSLSRDVRLEVEEKLKRGELKVVVSSTSLELGIDIGYIDLVTLLSSPKSVSRLLQRVGRAGHHIREVSKGRVVVVDRDDLVECTVLAKLAIDRKIDNIHVPENPLDVLTQLIVAASLITPIEKDKLYEIIKNVYNFRSLSYDEYNNVAEYLAGNYGLDSNKVYAKIRIKDGMISPKRGTRMIFFLNSGTIPDEAMIPVKMENGGYVGNLEEEFVEILAPGDIFVLAGKTYEFIRSEGNSVIVKKSEGQRPTVPSWFSEMLPLAFDSAIEIGKFRGKIAEAIMNEVPKDEVISSIMSEYNLSRFAALSIYNYVKEELLFTGGIVPTDKLLLIEVYDDDDQNRNFIFHGLYGRRTVDALSRAIAYIISKDLNMDVRIAITDNGFAITVPGKQEYEISKVFDKLEPDKMYEILSDVILRTEMIKRRFRHCAERSFMLLKRYKGRETSIDRRQINSEVLLGVVRQIEHFPVLKETVREILEDYMDIKRAIEIVEKIRNGDIKVATIGPNQVPSPFAHNILVKQYTDVVLAEDKRELLKELHNKVIEFLRNKGIDIDLEYTEAGIK.

ATP is bound by residues Q37, K60, T61, D175, E176, R374, and H377. A Helicase ATP-binding domain is found at 41–232 (IPLIKKGKNV…FLVGGNGDYE (192 aa)). Positions 175–178 (DEIH) match the DEAH box motif. The Helicase C-terminal domain maps to 249–421 (PVKDLVHATE…NIHVPENPLD (173 aa)). The interval 422–506 (VLTQLIVAAS…IFFLNSGTIP (85 aa)) is WH domain. Residues 507-876 (DEAMIPVKME…DLEYTEAGIK (370 aa)) are domain 4.

The protein belongs to the Lhr helicase family. Lhr-Core subfamily. As to quaternary structure, monomer.

The catalysed reaction is Couples ATP hydrolysis with the unwinding of duplex DNA by translocating in the 3'-5' direction.. It catalyses the reaction ATP + H2O = ADP + phosphate + H(+). In terms of biological role, probably part of a 4-gene DNA damage response locus in which the upstream ups system, in combination with this downstream locus, functions in homologous recombination to rescue Sulfolobales from DNA-damaging threats. DNA helicase that translocates in a 3'-5' direction on single-stranded (ss)DNA. Binds Holliday junction (HJ) DNA, Y-shaped DNA, DNA with a 3'-overhang and single-stranded (ss)DNA with high affinity; binds double-stranded (ds)DNA with less affinity. Has helicase activity on DNA with a 3'-overhang, Y-shaped DNA and HJ DNA. Does not unwind blunt-ended dsDNA or DNA with a 5'-overhang. The chain is ATP-dependent helicase Lhr-Core from Sulfolobus acidocaldarius (strain ATCC 33909 / DSM 639 / JCM 8929 / NBRC 15157 / NCIMB 11770).